Reading from the N-terminus, the 175-residue chain is Endoribonuclease YbeY (175 aa).

H129, H133, and H139 together coordinate Zn(2+).

This sequence belongs to the endoribonuclease YbeY family. Zn(2+) is required as a cofactor.

It localises to the cytoplasm. Functionally, single strand-specific metallo-endoribonuclease involved in late-stage 70S ribosome quality control and in maturation of the 3' terminus of the 16S rRNA. The protein is Endoribonuclease YbeY of Lactobacillus johnsonii (strain CNCM I-12250 / La1 / NCC 533).